A 185-amino-acid chain; its full sequence is Elongation factor P (185 aa).

This sequence belongs to the elongation factor P family.

The protein resides in the cytoplasm. The protein operates within protein biosynthesis; polypeptide chain elongation. Its function is as follows. Involved in peptide bond synthesis. Stimulates efficient translation and peptide-bond synthesis on native or reconstituted 70S ribosomes in vitro. Probably functions indirectly by altering the affinity of the ribosome for aminoacyl-tRNA, thus increasing their reactivity as acceptors for peptidyl transferase. This is Elongation factor P from Salinispora arenicola (strain CNS-205).